We begin with the raw amino-acid sequence, 425 residues long: Serine--tRNA ligase (425 aa).

Position 233-235 (T233–E235) interacts with L-serine. Residue R264–E266 coordinates ATP. E287 is an L-serine binding site. An ATP-binding site is contributed by E351–S354. S387 lines the L-serine pocket.

It belongs to the class-II aminoacyl-tRNA synthetase family. Type-1 seryl-tRNA synthetase subfamily. In terms of assembly, homodimer. The tRNA molecule binds across the dimer.

It is found in the cytoplasm. It carries out the reaction tRNA(Ser) + L-serine + ATP = L-seryl-tRNA(Ser) + AMP + diphosphate + H(+). The catalysed reaction is tRNA(Sec) + L-serine + ATP = L-seryl-tRNA(Sec) + AMP + diphosphate + H(+). The protein operates within aminoacyl-tRNA biosynthesis; selenocysteinyl-tRNA(Sec) biosynthesis; L-seryl-tRNA(Sec) from L-serine and tRNA(Sec): step 1/1. Catalyzes the attachment of serine to tRNA(Ser). Is also able to aminoacylate tRNA(Sec) with serine, to form the misacylated tRNA L-seryl-tRNA(Sec), which will be further converted into selenocysteinyl-tRNA(Sec). The sequence is that of Serine--tRNA ligase from Clostridium perfringens (strain ATCC 13124 / DSM 756 / JCM 1290 / NCIMB 6125 / NCTC 8237 / Type A).